A 255-amino-acid polypeptide reads, in one-letter code: Zinc import ATP-binding protein ZnuC 1 (255 aa).

The ABC transporter domain maps to 7–220 (IRLQDVTVKI…PAFINLFGTQ (214 aa)). 39–46 (GPNGAGKS) is a binding site for ATP. The segment at 229–255 (HHHHDHHHHTDGTVAAGSECSHGDQHA) is disordered.

It belongs to the ABC transporter superfamily. Zinc importer (TC 3.A.1.15.5) family. In terms of assembly, the complex is composed of two ATP-binding proteins (ZnuC), two transmembrane proteins (ZnuB) and a solute-binding protein (ZnuA).

It localises to the cell inner membrane. The enzyme catalyses Zn(2+)(out) + ATP(in) + H2O(in) = Zn(2+)(in) + ADP(in) + phosphate(in) + H(+)(in). In terms of biological role, part of the ABC transporter complex ZnuABC involved in zinc import. Responsible for energy coupling to the transport system. The polypeptide is Zinc import ATP-binding protein ZnuC 1 (Hahella chejuensis (strain KCTC 2396)).